The sequence spans 517 residues: Golgi-associated kinase 1B (517 aa).

Over 1-36 the chain is Cytoplasmic; that stretch reads MTCPDKPGQLVNWFVCSLCAPRVCKLWSSRRPRTRR. The helical; Signal-anchor for type II membrane protein transmembrane segment at 37–56 threads the bilayer; sequence NLLLGTACAIYLGFLVSQVG. Over 57–517 the chain is Extracellular; that stretch reads RGSFQHGQAT…HGARVLPMNE (461 aa). N98 and N287 each carry an N-linked (GlcNAc...) asparagine glycan.

This sequence belongs to the GASK family.

It is found in the golgi apparatus membrane. In Mus musculus (Mouse), this protein is Golgi-associated kinase 1B.